Here is a 533-residue protein sequence, read N- to C-terminus: Solute carrier family 2, facilitated glucose transporter member 2 (533 aa).

The Cytoplasmic portion of the chain corresponds to 1–17; sequence MDGKSKMQAEKHLTGTL. A helical membrane pass occupies residues 18-38; sequence VLSVFTAVLGFFQYGYSLGVI. Over 39–110 the chain is Extracellular; it reads NAPQKVIEAH…SPHILTMYWS (72 aa). N-linked (GlcNAc...) asparagine glycans are attached at residues Asn64 and Asn69. Residues 111 to 131 form a helical membrane-spanning segment; sequence LSVSMFAVGGMVSSFTVGWIG. The Cytoplasmic portion of the chain corresponds to 132 to 136; sequence DRLGR. The chain crosses the membrane as a helical span at residues 137 to 157; sequence VKAMLVVNVLSIAGNLLMGLA. Residues 158–163 lie on the Extracellular side of the membrane; that stretch reads KMGPSH. The chain crosses the membrane as a helical span at residues 164 to 184; the sequence is ILIIAGRAITGLYCGLSSGLV. Residues 185–199 lie on the Cytoplasmic side of the membrane; it reads PMYVSEVSPTALRGA. A helical transmembrane segment spans residues 200–220; that stretch reads LGTLHQLAIVTGILISQVLGL. D-glucose is bound at residue Gln205. The Extracellular segment spans residues 221–229; sequence DFLLGNDEL. Residues 230 to 250 traverse the membrane as a helical segment; the sequence is WPLLLGLSGVAALLQFFLLLL. Over 251–315 the chain is Cytoplasmic; it reads CPESPRYLYI…LFSSSKYRQA (65 aa). The helical transmembrane segment at 316-336 threads the bilayer; that stretch reads VIVALMVQISQQFSGINAIFY. D-glucose is bound by residues 326 to 327 and Asn332; that span reads QQ. At 337–350 the chain is on the extracellular side; the sequence is YSTNIFQRAGVGQP. The chain crosses the membrane as a helical span at residues 351–371; that stretch reads VYATIGVGVVNTVFTVISVFL. Residue Asn361 coordinates D-glucose. The Cytoplasmic segment spans residues 372 to 379; the sequence is VEKAGRRS. A helical membrane pass occupies residues 380–400; sequence LFLAGLMGMLISAVAMTVGLV. Residues 401–413 lie on the Extracellular side of the membrane; sequence LLSQFAWMSYVSM. A helical membrane pass occupies residues 414–434; sequence VAIFLFVIFFEVGPGPIPWFI. The D-glucose site is built by Glu424 and Trp432. Residues 435–445 lie on the Cytoplasmic side of the membrane; the sequence is VAELFSQGPRP. A helical transmembrane segment spans residues 446–466; it reads AAIAVAGFCNWACNFIVGMCF. Over 467 to 471 the chain is Extracellular; sequence QYIAD. The chain crosses the membrane as a helical span at residues 472–492; sequence LCGPYVFVVFAVLLLVFFLFA. The Cytoplasmic portion of the chain corresponds to 493 to 533; the sequence is YLKVPETKGKSFEEIAAAFRRKKLPAKSMTELEDLRGGEEA.

The protein belongs to the major facilitator superfamily. Sugar transporter (TC 2.A.1.1) family. Glucose transporter subfamily.

It localises to the cell membrane. It catalyses the reaction D-glucose(out) = D-glucose(in). The catalysed reaction is D-fructose(out) = D-fructose(in). It carries out the reaction L-dehydroascorbate(out) = L-dehydroascorbate(in). The enzyme catalyses D-galactose(in) = D-galactose(out). Its activity is regulated as follows. D-glucose and maltose competitively inhibit fructose transport. D-glucose, D-fructose and maltose inhibit deoxyglucose transport. Functionally, facilitative hexose transporter that mediates the transport of glucose, fructose and galactose. Likely mediates the bidirectional transfer of glucose across the plasma membrane of hepatocytes and is responsible for uptake of glucose by the beta cells. The sequence is that of Solute carrier family 2, facilitated glucose transporter member 2 from Gallus gallus (Chicken).